The sequence spans 749 residues: Protein Niban 2 (749 aa).

Gly-2 carries the N-myristoyl glycine lipid modification. A PH domain is found at 68-192 (RIIFSGNLFQ…WQAVLQDCVR (125 aa)). Phosphoserine occurs at positions 568, 574, 607, 628, 647, 650, 669, 674, 685, 695, and 699. A disordered region spans residues 589 to 749 (WGEQYGDSGD…EDSAGVQTEF (161 aa)). A compositionally biased stretch (basic and acidic residues) spans 710 to 719 (VDLEPPKPSD). A compositionally biased stretch (polar residues) spans 723-749 (GEQVSSPGSRPPIHTTTEDSAGVQTEF).

It belongs to the Niban family. In terms of processing, as apoptosis proceeds, degraded via an proteasome-independent pathway, probably by caspases.

Its subcellular location is the cytoplasm. It is found in the cytosol. The protein localises to the cell junction. It localises to the adherens junction. The protein resides in the membrane. Its function is as follows. May play a role in apoptosis suppression. In Mus musculus (Mouse), this protein is Protein Niban 2.